A 118-amino-acid polypeptide reads, in one-letter code: Large ribosomal subunit protein bL20c (118 aa).

The protein belongs to the bacterial ribosomal protein bL20 family.

The protein resides in the plastid. Its subcellular location is the chloroplast. In terms of biological role, binds directly to 23S ribosomal RNA and is necessary for the in vitro assembly process of the 50S ribosomal subunit. It is not involved in the protein synthesizing functions of that subunit. This Adiantum capillus-veneris (Maidenhair fern) protein is Large ribosomal subunit protein bL20c.